The sequence spans 1708 residues: MEEVAAKVEEETVETNVDAVKEDNATIANESRSPESVSAVSVVSNRAASTKKKPVISSNLIKPTASSSLRVSGTTPVTIRRNSTGGVTENLAGTSKVLPKQVSTTASRTDPVRRSLPELRKSSVSSLSAKTVSKPSLSESKKSVPVSPGSRSLTKSTGFSLSKPESSARPAMSVSVSSKRAPSSSVDSSGSRTSSGRLHSTLTSGRTVSKVSSPSAGSSPSVSSSIRSKSFSSPLDRTSNFSGRKKTSTPESRDSRLIILPKVEVKAGDDMRLDLRGHRIRSLTSGGLHLSPNLEFVYLRDNLLSTLEGIEILNRVKVLDLSFNDFKGPGFEPLENCKMLQQLYLAGNQITSLASLPQLPNLEFLSVAQNKLKSLAMASQPRLQVLAASKNKITTLKDFPYLPVLEHLRVEENPLLKISHLEAASILLVGPTLKKFNDRDLSREEVAIAKRYPPQTALCLREGWEFCKSDLAAESTFRFLVERWKDTLPSGYLIKEAHVDRPSEEAPCQCHFGLFQESPTATDQELALKFQWSVADRSLSNFVPILNATKEVYWPKREDIGKILKIECTPVMAETEYPSIFAISSPVQRGKGIPKVVSLELNGELVEGNIIKGQAVVAWCGGTPGKCITSWLRRKWNGSPVVIDGAEDEEYMLSLDDVGSSMVFMYTPVTEGGARGEPQYKYTEFVKAAPPSVSNVRITGDAVEGCVLKGVGDYFGGKEGPSKFEWLRKNKETGELSLISAGTSEYTLTQEDVGTHVTFVYIPANFEGLEGEPVSTSSSVVKPAPPKVTDAKIVGDLRENSKVTVTGTVTGGTEGSSRVQWFKSSCSILEGDNSLEELSTSKVAKSFRIPLGAVGYYIVAKYTPMTPDGECGEPVYVLSERAVETLPPSLNFLSITGDNIEGGILTASYGYIGGHEGKSKYEWHYHKAENDLPGALIPEASGLLQYTITKEAIGKFISFQCIPVRDDGIVGEPRSCMSQERVRPGNPSTVSLHVVGALVEGTMLSAEKEYWGGEEGASVFRWFRTNSDGTPCEIKGATTSSYLLSVGDIGYFISVSYEPVRNDRARGPTAISEIAGPIVAGHPNCQSLEFLGSMIEGQRLSFVASYTGGMKGNCYLEWVRVKNNGVKEILSSDEFLDLSLDDVGESIELIYTPVREDGIEGSPRSIRTDGIAPANPMGLELLIPDCCEKQEVVPHKTYFGGHEGVGEYIWYRTKVKLHGSALTEISYAGEEVVVCCRTLKYTPSLEDVGAYLVLYWIPTRVDGRSGKPVVVITNSPVAPADPEVSNVRVKKLFSDAYSGEGEYFGGHEGPSLFSWYRENDGTIDLIDGANSKTYEVTESDYNCRILFGYTPVRSDSVVGELKMSEPTEIILPEVPKVDMLAFTGKAVQGDVLTAVQVIPKTEIQQLVWSKYKGDIQYQWFRSPESGDKISYEALSSEISCSYKVRFEDIGRCLKCECVVHDVFGRSSELAYAETDPISPGFPRIEKLEIEGQGFHTNLYAVRGNYFGGKEGKSKIQWLRSMVGSPDLISIPGETGRMYEANVDDVGYRLVVVYTPIREDGVQGHPVSASTEPVAVEPDILKEVRQKLETGLVKFEVLCDKDPYPKKIVGEGNLERRMLEMNRKRIKVVKPGSKTSFATTEVRGSYGPPFHVETFRNDQRRLRIVVDSENEVDIVVQSRHLRDVIVLVIRGFAQRFNSTSLNSLLKIDT.

The span at 67 to 93 shows a compositional bias: polar residues; that stretch reads SSLRVSGTTPVTIRRNSTGGVTENLAG. The segment at 67-255 is disordered; that stretch reads SSLRVSGTTP…KTSTPESRDS (189 aa). Residues 110–121 are compositionally biased toward basic and acidic residues; that stretch reads DPVRRSLPELRK. Residues 122–134 show a composition bias toward low complexity; it reads SSVSSLSAKTVSK. The segment covering 149 to 165 has biased composition (polar residues); sequence GSRSLTKSTGFSLSKPE. Positions 173 to 234 are enriched in low complexity; that stretch reads SVSVSSKRAP…SIRSKSFSSP (62 aa). LRR repeat units lie at residues 267-290, 291-315, 316-335, 337-359, 360-382, 384-402, and 403-425; these read AGDD…GLHL, SPNL…ILNR, VKVL…EPLE, CKML…LPQL, PNLE…SQPR, QVLA…FPYL, and PVLE…EAAS. 11 A9 repeats span residues 489–584, 601–682, 698–777, 793–878, 895–977, 994–1073, 1090–1167, 1183–1272, 1287–1365, 1382–1473, and 1489–1569; these read PSGY…FAIS, LNGE…QYKY, ITGD…VSTS, IVGD…VYVL, ITGD…RSCM, VVGA…AISE, FLGS…RSIR, IPDC…VVVI, VRVK…KMSE, FTGK…AYAE, and IEGQ…VSAS.

Interacts with KCBP. In terms of tissue distribution, strongly expressed in dividing cells, like the meristemic region of the root tip.

The protein localises to the cytoplasm. It localises to the cell cortex. The protein resides in the cytoskeleton. Its subcellular location is the phragmoplast. Microtubule-associated protein that may be involved in the maturation of cell plates and proper insertion of cross-walls after cytokinesis. The protein is 187-kDa microtubule-associated protein AIR9 of Arabidopsis thaliana (Mouse-ear cress).